A 433-amino-acid chain; its full sequence is Serine hydroxymethyltransferase (433 aa).

Residues Leu-132 and 136 to 138 each bind (6S)-5,6,7,8-tetrahydrofolate; that span reads GHL. Lys-241 carries the post-translational modification N6-(pyridoxal phosphate)lysine.

Belongs to the SHMT family. As to quaternary structure, homodimer. Pyridoxal 5'-phosphate is required as a cofactor.

It localises to the cytoplasm. The catalysed reaction is (6R)-5,10-methylene-5,6,7,8-tetrahydrofolate + glycine + H2O = (6S)-5,6,7,8-tetrahydrofolate + L-serine. It participates in one-carbon metabolism; tetrahydrofolate interconversion. The protein operates within amino-acid biosynthesis; glycine biosynthesis; glycine from L-serine: step 1/1. Catalyzes the reversible interconversion of serine and glycine with tetrahydrofolate (THF) serving as the one-carbon carrier. This reaction serves as the major source of one-carbon groups required for the biosynthesis of purines, thymidylate, methionine, and other important biomolecules. Also exhibits THF-independent aldolase activity toward beta-hydroxyamino acids, producing glycine and aldehydes, via a retro-aldol mechanism. The polypeptide is Serine hydroxymethyltransferase (Afipia carboxidovorans (strain ATCC 49405 / DSM 1227 / KCTC 32145 / OM5) (Oligotropha carboxidovorans)).